The chain runs to 242 residues: Phosducin-like protein 2 (242 aa).

Residues 34 to 201 (VLRLQKEAMV…LEWKLAEVGA (168 aa)) form the Phosducin domain. The thioredoxin fold stretch occupies residues 89-242 (FGELREISGN…SSNSDSEDTK (154 aa)).

This sequence belongs to the phosducin family. In terms of assembly, interacts with the CCT chaperonin complex and actin.

Its subcellular location is the endoplasmic reticulum. Functionally, essential for male fertility, spermiogenesis and acrosome formation. This chain is Phosducin-like protein 2 (PDCL2), found in Bos taurus (Bovine).